The following is a 1603-amino-acid chain: Gag-Pol polyprotein (1603 aa).

A compositionally biased stretch (basic and acidic residues) spans 128–141; the sequence is VGETTVQRDAKMAP. The segment at 128-150 is disordered; that stretch reads VGETTVQRDAKMAPEETATPKTV. Residues 172–175 carry the PPXY motif motif; it reads PPPY. The LYPX(n)L motif motif lies at 180-184; sequence LYPSL. Positions 181 to 217 are disordered; the sequence is YPSLAGVGEQQGQGGDTPPGAEQSRAEPGHAGQAPGP. 3 involved in capsid protein dimerization regions span residues 217–259, 290–298, and 351–362; these read PALT…KLIT, HDVTNLMRV, and GMVGNPQGQAAL. The Nuclear export signal signature appears at 219–229; it reads LTDWARVREEL. 2 CCHC-type zinc fingers span residues 507–524 and 533–550; these read GLCY…QCPK and ERCQ…QCRK. Positions 524 to 527 match the Nuclear/nucleolar localization signal motif; that stretch reads KKRK. The disordered stretch occupies residues 543–575; sequence HNAKQCRKRDGNQGQRPGKGLSSGPWPGPEPPA. The region spanning 609–690 is the Peptidase A2 domain; sequence ITALLDSGAD…VRGSILGRDC (82 aa). Residue Asp-614 is the For protease activity; shared with dimeric partner of the active site. The Reverse transcriptase domain occupies 750 to 938; sequence LQLGHIEPSL…PGVQYLGYKL (189 aa). 7 residues coordinate Mg(2+): Asp-815, Asp-890, Asp-891, Asp-1158, Glu-1192, Asp-1213, and Asp-1272. The 132-residue stretch at 1149-1280 folds into the RNase H type-1 domain; it reads PVPGPTVFTD…ADSQATFQAY (132 aa). Residues 1280 to 1321 form an Integrase-type zinc finger; that stretch reads YPLREAKDLHTALHIGPRALSKACNISMQQAREVVQTCPHCN. The Zn(2+) site is built by His-1289, His-1293, Cys-1317, and Cys-1320. Positions 1333–1496 constitute an Integrase catalytic domain; sequence RGLGPLQIWQ…TPIQKHWRPT (164 aa). Mg(2+)-binding residues include Asp-1344, Asp-1401, and Glu-1437. A DNA-binding region (integrase-type) is located at residues 1502–1550; it reads PPVKIRIETGEWEKGWNVLVWGRGYAAVKNRDTDKVIWVPSRKVKPDIT. Residues 1548–1567 are involved in homooctamerization; it reads DITQKDEVTKKDEASPLFAG. The disordered stretch occupies residues 1569 to 1603; the sequence is SDWIPWEDEQEGLQGETASNKQERPGEDTLAANES.

As to quaternary structure, active as a homodimer. Homodimer. Homomultimer. Homohexamer. In terms of assembly, homodimer; further associates as a homooctamer. As to quaternary structure, heterodimer of alpha and beta subunits. Three forms of RT exist: alpha-alpha (alpha-Pol), beta-beta (beta-Pol), and alpha-beta, with the major form being the heterodimer. Both the polymerase and RNase H active sites are located in the alpha subunit of heterodimeric RT alpha-beta. Requires Mg(2+) as cofactor. Mn(2+) serves as cofactor. In terms of processing, specific enzymatic cleavages in vivo yield mature proteins. Post-translationally, capsid protein p27: The cleavage at the C-terminus is slowly trimmed by the viral protease, sometimes being cut internally thereby generating the short version of the capsid protein and a capsid protein C-terminally extended by 3 amino acids in a ratio of 2:1.

Its subcellular location is the virion. It carries out the reaction DNA(n) + a 2'-deoxyribonucleoside 5'-triphosphate = DNA(n+1) + diphosphate. It catalyses the reaction Endonucleolytic cleavage to 5'-phosphomonoester.. Functionally, capsid protein p27: Self-associates to form the irregular polyhedron core composed of hexamers and pentamers, that encapsulates the genomic RNA-nucleocapsid complex. Assembles as a tube in vitro. Binds to inositol hexakisphosphate (IP6), which allows the assembly of the polyhedral capsid. Plays a role in the oligomerization of the Gag polyprotein and in the stabilization of the immature particle. Essential layering element during tube assembly. Allows the cooperative binging of Gag to the host plasma membrane. In terms of biological role, binds strongly to viral nucleic acids and promotes their packaging. Plays a role in the maturation-stabilization of the viral dimeric RNA via highly structured zinc-binding motifs. Its function is as follows. The aspartyl protease mediates proteolytic cleavages of Gag and Gag-Pol polyproteins during or shortly after the release of the virion from the plasma membrane. Cleavages take place as an ordered, step-wise cascade to yield mature proteins. This process is called maturation. Displays maximal activity during the budding process just prior to particle release from the cell. Functionally, catalyzes viral DNA integration into the host chromosome, by performing a series of DNA cutting and joining reactions. This recombination event is an essential step in the viral replication cycle. Has a strong preference for using the 3'-OH at the viral DNA end as a nucleophile. This Gallus gallus (Chicken) protein is Gag-Pol polyprotein (gag-pol).